Reading from the N-terminus, the 106-residue chain is Trp operon repressor homolog (106 aa).

A DNA-binding region spans residues 59–82 (QREIQQILNTSAATITRGSNMIKI).

It belongs to the TrpR family. In terms of assembly, homodimer.

Its subcellular location is the cytoplasm. Functionally, this protein is an aporepressor. When complexed with L-tryptophan it binds the operator region of the trp operon and prevents the initiation of transcription. This Histophilus somni (strain 2336) (Haemophilus somnus) protein is Trp operon repressor homolog.